The sequence spans 274 residues: Kit ligand (274 aa).

Positions 1 to 25 (MKKTQTWIITCIYLQLLLFNPLVKT) are cleaved as a signal peptide. Topologically, residues 26–215 (KGICENRVTD…SNFTGDSNLQ (190 aa)) are extracellular. 2 disulfides stabilise this stretch: C29–C114 and C68–C164. Residues N90, N97, N145, N196, and N207 are each glycosylated (N-linked (GlcNAc...) asparagine). Residues 216–238 (WAAMALPAFFSLVIGFAFGALYW) form a helical membrane-spanning segment. Residues 239–274 (KKKQPNLTRAVENIQINEEDNEISMLQEKEREFQEV) are Cytoplasmic-facing.

This sequence belongs to the SCF family. Homodimer, non-covalently linked. In terms of processing, a soluble form is produced by proteolytic processing of the extracellular domain.

The protein localises to the cytoplasm. Its subcellular location is the cytoskeleton. It is found in the cell membrane. The protein resides in the cell projection. It localises to the lamellipodium. The protein localises to the filopodium. Its subcellular location is the secreted. In terms of biological role, stimulates the proliferation of mast cells. Able to augment the proliferation of both myeloid and lymphoid hematopoietic progenitors in bone marrow culture. Also mediates cell-cell adhesion. Acts synergistically with other cytokines, probably interleukins. This chain is Kit ligand (KITLG), found in Equus caballus (Horse).